Consider the following 163-residue polypeptide: ECF RNA polymerase sigma factor SigM (163 aa).

Residues 30–43 carry the Polymerase core binding motif; sequence DLLQETFMRAYIHI. Residues 127–146 constitute a DNA-binding region (H-T-H motif); that stretch reads YKEASHIMNISEANFKSVLF.

Belongs to the sigma-70 factor family. ECF subfamily. As to quaternary structure, interacts with the N-terminus of YhdL, which is probably its anti-sigma factor. Interacts transiently with the RNAP core.

Sigma factors are initiation factors that promote the attachment of RNA polymerase (RNAP) to specific initiation sites and are then released. Extracytoplasmic function (ECF) sigma factors are held in an inactive form by a cognate anti-sigma factor (YhdL) until released. This sigma factor is involved in the maintenance of membrane and cell wall integrity in response to environmental stresses including salt, acid, ethanol and antibiotics stress. Partially regulates transcription from a number of genes including disA. Associates with RNAP core under all growth phases. This chain is ECF RNA polymerase sigma factor SigM (sigM), found in Bacillus subtilis (strain 168).